A 223-amino-acid polypeptide reads, in one-letter code: UPF0502 protein Shew185_1758 (223 aa).

It belongs to the UPF0502 family.

In Shewanella baltica (strain OS185), this protein is UPF0502 protein Shew185_1758.